The chain runs to 411 residues: D-galactonate dehydratase family member SBI_01856 (411 aa).

Residues asparagine 45 and histidine 130 each contribute to the substrate site. Tyrosine 167 functions as the Proton donor/acceptor in the catalytic mechanism. Aspartate 219 serves as a coordination point for Mg(2+). Catalysis depends on histidine 221, which acts as the Proton donor/acceptor. 2 residues coordinate Mg(2+): glutamate 245 and glutamate 271. Residues glutamate 271, arginine 292, histidine 321, aspartate 325, and glutamate 348 each contribute to the substrate site.

It belongs to the mandelate racemase/muconate lactonizing enzyme family. GalD subfamily. Mg(2+) is required as a cofactor.

It carries out the reaction D-gluconate = 2-dehydro-3-deoxy-D-gluconate + H2O. Its function is as follows. Has low D-gluconate dehydratase activity (in vitro), suggesting that it has no significant role in D-gluconate degradation in vivo. Has no detectable activity with a panel of 70 other acid sugars (in vitro). In Streptomyces bingchenggensis (strain BCW-1), this protein is D-galactonate dehydratase family member SBI_01856.